A 327-amino-acid polypeptide reads, in one-letter code: MEANQSHNAKTNHPTCLTIAGSDCSGAAGIQADLKVMTAHQVYGMSVLTALTCQNSHGITGIYPLHPSLIQRQIDACLSDIQCRVVKIGMLPDPKSIPVISQALTKYKITDVVMDSVIISSMGNVMCETPTIPATIQHLFPHLLVYASNVMEAFILVEKTLKKSPPPLKSFPDIQNLMSIIHRLGPKFVVLRGHHVAFDKNMMITEKPDSKSWTADLIYDGKEFYIFEKPYNTTKSIHGESCSLTAAIASNLACNIPPLQAIHEALYSIEWAIQRVHKKSSDPYKSAQLFTALGHSSKFSGSLISLKSENYIPQADLTSVLLSHIPS.

Position 54 (Q54) interacts with 4-amino-5-hydroxymethyl-2-methylpyrimidine.

The protein belongs to the ThiD family.

It localises to the cytoplasm. The protein resides in the nucleus. The enzyme catalyses 4-amino-5-hydroxymethyl-2-methylpyrimidine + ATP = 4-amino-2-methyl-5-(phosphooxymethyl)pyrimidine + ADP + H(+). It carries out the reaction 4-amino-2-methyl-5-(phosphooxymethyl)pyrimidine + ATP = 4-amino-2-methyl-5-(diphosphooxymethyl)pyrimidine + ADP. It functions in the pathway cofactor biosynthesis; thiamine diphosphate biosynthesis; 4-amino-2-methyl-5-diphosphomethylpyrimidine from 5-amino-1-(5-phospho-D-ribosyl)imidazole: step 2/3. The protein operates within cofactor biosynthesis; thiamine diphosphate biosynthesis; 4-amino-2-methyl-5-diphosphomethylpyrimidine from 5-amino-1-(5-phospho-D-ribosyl)imidazole: step 3/3. Its function is as follows. Catalyzes the phosphorylation of hydroxymethylpyrimidine phosphate (HMP-P) to HMP-PP, and of HMP to HMP-P. The polypeptide is Putative hydroxymethylpyrimidine/phosphomethylpyrimidine kinase C18B5.05c (Schizosaccharomyces pombe (strain 972 / ATCC 24843) (Fission yeast)).